A 360-amino-acid polypeptide reads, in one-letter code: Histidinol-phosphate aminotransferase 2 (360 aa).

An N6-(pyridoxal phosphate)lysine modification is found at K218.

This sequence belongs to the class-II pyridoxal-phosphate-dependent aminotransferase family. Histidinol-phosphate aminotransferase subfamily. As to quaternary structure, homodimer. The cofactor is pyridoxal 5'-phosphate.

It carries out the reaction L-histidinol phosphate + 2-oxoglutarate = 3-(imidazol-4-yl)-2-oxopropyl phosphate + L-glutamate. It functions in the pathway amino-acid biosynthesis; L-histidine biosynthesis; L-histidine from 5-phospho-alpha-D-ribose 1-diphosphate: step 7/9. This is Histidinol-phosphate aminotransferase 2 from Nitrosococcus oceani (strain ATCC 19707 / BCRC 17464 / JCM 30415 / NCIMB 11848 / C-107).